The primary structure comprises 317 residues: 17-beta-hydroxysteroid dehydrogenase type 6 (317 aa).

An N-terminal signal peptide occupies residues 1–17 (MWFYLVTLVGLYYLLRW). 33-57 (FITGCDSGFGNLLARQLDRRGMRVL) contributes to the NAD(+) binding site. Residue asparagine 161 is glycosylated (N-linked (GlcNAc...) asparagine). Serine 164 contacts substrate. Tyrosine 176 acts as the Proton acceptor in catalysis.

It belongs to the short-chain dehydrogenases/reductases (SDR) family. As to expression, detected in prostate, liver and kidney.

It is found in the microsome membrane. It localises to the endoplasmic reticulum membrane. The enzyme catalyses all-trans-retinol--[retinol-binding protein] + NAD(+) = all-trans-retinal--[retinol-binding protein] + NADH + H(+). The catalysed reaction is all-trans-retinol + NAD(+) = all-trans-retinal + NADH + H(+). It catalyses the reaction androsterone + NAD(+) = 5alpha-androstan-3,17-dione + NADH + H(+). It carries out the reaction testosterone + NAD(+) = androst-4-ene-3,17-dione + NADH + H(+). The enzyme catalyses 5alpha-androstane-3alpha,17beta-diol + NAD(+) = 17beta-hydroxy-5alpha-androstan-3-one + NADH + H(+). The catalysed reaction is 17beta-estradiol + NAD(+) = estrone + NADH + H(+). It catalyses the reaction 17beta-estradiol + NADP(+) = estrone + NADPH + H(+). It carries out the reaction 3alpha-hydroxy-5alpha-pregnan-20-one + NAD(+) = 5alpha-pregnane-3,20-dione + NADH + H(+). The enzyme catalyses 5alpha-androstane-3beta,17beta-diol + NAD(+) = 17beta-hydroxy-5alpha-androstan-3-one + NADH + H(+). The catalysed reaction is 3beta-hydroxy-5alpha-androstan-17-one + NAD(+) = 5alpha-androstan-3,17-dione + NADH + H(+). With respect to regulation, competitively inhibited by 9-cis-retinoic acid and 13-cis-retinoic acid. Functionally, NAD-dependent oxidoreductase with broad substrate specificity that shows both oxidative and reductive activity (in vitro). Has retinol dehydrogenase activity towards all-trans-retinol (in vitro). Has 17-beta-hydroxysteroid dehydrogenase activity towards various steroids (in vitro). Converts 5-alpha-androstan-3-alpha,17-beta-diol to androsterone and estradiol to estrone (in vitro). Has 3-alpha-hydroxysteroid dehydrogenase activity towards androsterone (in vitro). This chain is 17-beta-hydroxysteroid dehydrogenase type 6 (Hsd17b6), found in Rattus norvegicus (Rat).